The sequence spans 154 residues: Endoribonuclease YbeY (154 aa).

Zn(2+) contacts are provided by His114, His118, and His124.

Belongs to the endoribonuclease YbeY family. Zn(2+) serves as cofactor.

It is found in the cytoplasm. Single strand-specific metallo-endoribonuclease involved in late-stage 70S ribosome quality control and in maturation of the 3' terminus of the 16S rRNA. This is Endoribonuclease YbeY from Marinomonas sp. (strain MWYL1).